We begin with the raw amino-acid sequence, 78 residues long: Large ribosomal subunit protein bL28 (78 aa).

The protein belongs to the bacterial ribosomal protein bL28 family.

The protein is Large ribosomal subunit protein bL28 of Thiobacillus denitrificans (strain ATCC 25259 / T1).